The chain runs to 136 residues: Keratin-associated protein 9-3 (136 aa).

11 repeat units span residues 3 to 7 (CCATS), 21 to 25 (CCQPT), 31 to 35 (CCQPS), 36 to 40 (CCEAS), 41 to 45 (CCQPS), 46 to 50 (CCETG), 87 to 91 (CCVVS), 97 to 101 (CCQLH), 107 to 111 (CCRPS), 117 to 121 (CCRPA), and 126 to 130 (CCQPS). The 11 X 5 AA repeats of C-C-[AEQVR]-[ALPTV]-[AGHST] stretch occupies residues 21–130 (CCQPTCTQSS…ACCCYCCQPS (110 aa)).

This sequence belongs to the KRTAP type 9 family. In terms of assembly, interacts with hair keratins.

Its function is as follows. In the hair cortex, hair keratin intermediate filaments are embedded in an interfilamentous matrix, consisting of hair keratin-associated proteins (KRTAP), which are essential for the formation of a rigid and resistant hair shaft through their extensive disulfide bond cross-linking with abundant cysteine residues of hair keratins. The matrix proteins include the high-sulfur and high-glycine-tyrosine keratins. This chain is Keratin-associated protein 9-3, found in Mus musculus (Mouse).